Reading from the N-terminus, the 985-residue chain is Alpha-glucosidase (985 aa).

Positions methionine 1–leucine 25 are cleaved as a signal peptide. A glycan (O-linked (Man) threonine) is linked at threonine 36. N-linked (GlcNAc...) asparagine glycans are attached at residues asparagine 124, asparagine 143, asparagine 218, asparagine 347, and asparagine 422. Aspartate 490 (nucleophile) is an active-site residue. Residue glutamate 493 is part of the active site. N-linked (GlcNAc...) asparagine glycans are attached at residues asparagine 506, asparagine 534, and asparagine 537. O-linked (Man) serine glycans are attached at residues serine 545 and serine 550. O-linked (Man) threonine glycosylation occurs at threonine 559. A glycan (O-linked (Man) serine) is linked at serine 560. An O-linked (Man) threonine glycan is attached at threonine 561. Serine 562 carries O-linked (Man) serine glycosylation. An O-linked (Man) threonine glycan is attached at threonine 571. Asparagine 601 and asparagine 623 each carry an N-linked (GlcNAc...) asparagine glycan. Residue aspartate 660 is the Proton donor of the active site. Residues asparagine 835 and asparagine 881 are each glycosylated (N-linked (GlcNAc...) asparagine). Serine 895 carries O-linked (Man) serine glycosylation. Asparagine 899, asparagine 957, and asparagine 970 each carry an N-linked (GlcNAc...) asparagine glycan.

Belongs to the glycosyl hydrolase 31 family. Post-translationally, the O-linked saccharide is not identified, but is probably mannose.

It carries out the reaction Hydrolysis of terminal, non-reducing (1-&gt;4)-linked alpha-D-glucose residues with release of alpha-D-glucose.. Hydrolyzes malto-oligosaccharides, but has a low activity toward soluble starch. The polypeptide is Alpha-glucosidase (aglA) (Aspergillus niger).